We begin with the raw amino-acid sequence, 391 residues long: Elongation factor Tu (391 aa).

Positions 10–201 constitute a tr-type G domain; sequence KPHVNIGTIG…AVDAYIPTPE (192 aa). A G1 region spans residues 19 to 26; that stretch reads GHVDHGKT. 19 to 26 serves as a coordination point for GTP; sequence GHVDHGKT. Residue Thr26 participates in Mg(2+) binding. Residues 55–59 are G2; the sequence is GITIS. The interval 76–79 is G3; sequence DCPG. GTP is bound by residues 76-80 and 131-134; these read DCPGH and NKVD. Positions 131 to 134 are G4; it reads NKVD. Positions 169-171 are G5; it reads SAL.

The protein belongs to the TRAFAC class translation factor GTPase superfamily. Classic translation factor GTPase family. EF-Tu/EF-1A subfamily. In terms of assembly, monomer.

Its subcellular location is the cytoplasm. The catalysed reaction is GTP + H2O = GDP + phosphate + H(+). GTP hydrolase that promotes the GTP-dependent binding of aminoacyl-tRNA to the A-site of ribosomes during protein biosynthesis. In Rhizobium johnstonii (strain DSM 114642 / LMG 32736 / 3841) (Rhizobium leguminosarum bv. viciae), this protein is Elongation factor Tu.